A 101-amino-acid chain; its full sequence is MAKKSKIVQNERRREIVARHAERRAELKAIIKSPSTTPEARVAAQSELNRQPRDASPVRVRNRDSVDGRPRGHLRKFGLSRVRVRELAHQGQLPGVRKSSW.

The segment at 31-73 is disordered; it reads IKSPSTTPEARVAAQSELNRQPRDASPVRVRNRDSVDGRPRGH. The span at 61–70 shows a compositional bias: basic and acidic residues; the sequence is RNRDSVDGRP.

The protein belongs to the universal ribosomal protein uS14 family. As to quaternary structure, part of the 30S ribosomal subunit. Contacts proteins S3 and S10.

Its function is as follows. Binds 16S rRNA, required for the assembly of 30S particles and may also be responsible for determining the conformation of the 16S rRNA at the A site. In Mycolicibacterium vanbaalenii (strain DSM 7251 / JCM 13017 / BCRC 16820 / KCTC 9966 / NRRL B-24157 / PYR-1) (Mycobacterium vanbaalenii), this protein is Small ribosomal subunit protein uS14A.